The sequence spans 314 residues: MSQALRIVFAGTPEFAAEHLKALLDTPHRIVAVYTQPDRPAGRGQKLMPSAVKNLALEHGLPVMQPQSLRNAEAQAELAALRADLMVVVAYGLILPQAVLDIPRLGCINSHASLLPRWRGAAPIQRAVEAGDAESGVTVMQMEAGLDTGPMLLKVSTPISAADTGGSLHDRLAALGPKAVIEAIAGLAAGTLHGEIQDDALATYAHKLNKDEARLDWSRPAVELERQVRAFTPWPVCHTSLADAPLKVLGASLGQGSGAPGTILEASRDGLLVACGEGALRLTRLQLPGGKPLAFADLYNSRREQFAAGQVLGQ.

Residue serine 113–proline 116 coordinates (6S)-5,6,7,8-tetrahydrofolate.

This sequence belongs to the Fmt family.

It catalyses the reaction L-methionyl-tRNA(fMet) + (6R)-10-formyltetrahydrofolate = N-formyl-L-methionyl-tRNA(fMet) + (6S)-5,6,7,8-tetrahydrofolate + H(+). In terms of biological role, attaches a formyl group to the free amino group of methionyl-tRNA(fMet). The formyl group appears to play a dual role in the initiator identity of N-formylmethionyl-tRNA by promoting its recognition by IF2 and preventing the misappropriation of this tRNA by the elongation apparatus. The protein is Methionyl-tRNA formyltransferase of Pseudomonas aeruginosa (strain LESB58).